Here is an 826-residue protein sequence, read N- to C-terminus: Capsid-associated protein Vp91 (826 aa).

Residues 1-18 form the signal peptide; the sequence is MSDVVLLVLAIIFIIIFV. The segment at 147 to 196 adopts a C2HC BV-type zinc-finger fold; it reads CVPINPCDTRAPGLYAMDEHLLDALVHSQHLDKDYTINAHLQHPTLYLRC. Cystine bridges form between C207–C220 and C260–C273. An N-linked (GlcNAc...) asparagine; by host glycan is attached at N210. The Chitin-binding type-2 domain occupies 223–281; it reads NELCQGRPDGYVLDYFPETLLVNEFVECYESKHVVKQCPEQHVFDRQLMTCVQAHPCAF. N333, N371, N413, N510, N520, and N609 each carry an N-linked (GlcNAc...) asparagine; by host glycan. Residues 651 to 679 form a disordered region; the sequence is GDGDHWGPDLPPPVQPDSEPDESEPEPEV. Residues 668-677 show a composition bias toward acidic residues; sequence SEPDESEPEP. An N-linked (GlcNAc...) asparagine; by host glycan is attached at N722.

Its subcellular location is the virion. Functionally, probable capsid-associated protein. The polypeptide is Capsid-associated protein Vp91 (Epiphyas postvittana nucleopolyhedrovirus (EppoMNPV)).